A 99-amino-acid chain; its full sequence is Small ribosomal subunit protein bS20 (99 aa).

Belongs to the bacterial ribosomal protein bS20 family.

Functionally, binds directly to 16S ribosomal RNA. The polypeptide is Small ribosomal subunit protein bS20 (Caldicellulosiruptor saccharolyticus (strain ATCC 43494 / DSM 8903 / Tp8T 6331)).